The primary structure comprises 1328 residues: WASH complex subunit 2 (1328 aa).

A sufficient for interaction with WASHC3, WASHC4 and WASHC5; required for interaction with WASHC1 region spans residues 1–219 (MNRTSPDSEQ…VGSDRGSIVD (219 aa)). 5 positions are modified to phosphoserine: serine 157, serine 159, serine 204, serine 205, and serine 209. Residues 201-213 (GELSSEEGSVGSD) show a composition bias toward low complexity. 2 disordered regions span residues 201–655 (GELS…KTNL) and 675–830 (KKTQ…PKST). Acidic residues-rich tracts occupy residues 219-231 (DSED…ESDD) and 248-273 (SDEE…EDIE). Serine 283 carries the phosphoserine modification. Basic and acidic residues predominate over residues 288-323 (LAARIKGDVSNQRKEGHTDGKPQRTVKEKKERRTPA). Threonine 321 carries the post-translational modification Phosphothreonine. The segment at 346–592 (SRGGLFSDRQ…QTSSLPPQSQ (247 aa)) is sufficient for interaction with CCDC93. The segment at 347-1328 (RGGLFSDRQG…DDPLNAFGSQ (982 aa)) is interaction with VPS35. Positions 357-367 (LFDDDDESDLF) match the LFa 1 motif. Serine 384 and serine 387 each carry phosphoserine. 2 short sequence motifs (LFa) span residues 440–455 (LFDD…DNFF) and 474–483 (IFDDDEGDLF). Residues 441–453 (FDDDDNDSDEDDN) show a composition bias toward acidic residues. Polar residues predominate over residues 508-528 (TITLPSSKNPKLVSETKTQKG). 2 short sequence motifs (LFa) span residues 529–540 (LFSDEEDSEDLF) and 564–575 (LFGDEDEEDNLF). Phosphoserine occurs at positions 531 and 536. Residues 539–556 (LFSSQSSSKTKSASVLSS) are compositionally biased toward low complexity. The segment covering 582–592 (KQTSSLPPQSQ) has biased composition (polar residues). Residues serine 610 and serine 611 each carry the phosphoserine modification. Over residues 627–638 (ASERKSKGERWD) the composition is skewed to basic and acidic residues. 2 consecutive short sequence motifs (LFa) follow at residues 655–667 (LFEE…VDLF) and 683–695 (LFED…SSLF). Polar residues predominate over residues 690–699 (SGSSLFSLPP). Residues serine 720, serine 744, serine 749, serine 780, and serine 795 each carry the phosphoserine modification. Over residues 797-808 (FDEDEDKVEDDS) the composition is skewed to acidic residues. 2 short sequence motifs (LFa) span residues 832 to 840 (VFQDEELLF) and 849 to 855 (DPDVDLF). Disordered stretches follow at residues 863–940 (LSMP…EPSS) and 991–1088 (PTLP…AMAV). Phosphoserine occurs at positions 867 and 870. Residues 871 to 881 (LFGDDDDDDLF) carry the LFa 10 motif. The span at 894 to 919 (PEKKGTLRKDHKPPELTEGSKEKSTW) shows a compositional bias: basic and acidic residues. Residues 925–1328 (QDSSGLTPFK…DDPLNAFGSQ (404 aa)) are interaction with phospholipids. Basic residues predominate over residues 1016–1034 (NKGRVKVRGKRRPQTRAAR). Residues 1017-1035 (KGRVKVRGKRRPQTRAARR) are required for interaction with F-actin-capping protein subunit alpha (CAPZA1 or CAPZA2 or CAPZA3). A phosphoserine mark is found at serine 1042, serine 1060, serine 1077, and serine 1102. Positions 1115–1210 (AHLFDSGDIF…KKNQWKSDSH (96 aa)) are disordered. 3 short sequence motifs (LFa) span residues 1117-1124 (LFDSGDIF), 1157-1171 (VFPD…DDLF), and 1187-1195 (LLEDEEDLF). Serine 1162 and serine 1165 each carry phosphoserine. The segment covering 1196 to 1210 (ADQKGKKNQWKSDSH) has biased composition (basic and acidic residues). Short sequence motifs (LFa) lie at residues 1220–1226 (IFEDDIF), 1249–1257 (LFDDNIDIF), and 1277–1286 (MFDDDTDDIF). A disordered region spans residues 1289–1310 (GLQAKASKPKSQSAEAVSELRS). The LFa 17 motif lies at 1317-1325 (IFDDPLNAF). Position 1327 is a phosphoserine (serine 1327).

It belongs to the FAM21 family. Component of the WASH core complex also described as WASH regulatory complex (SHRC) composed of WASHC1, WASHC2, WASHC3, WASHC4 and WASHC5; in the complex interacts (via N-terminus) directly with WASHC1. The WASH core complex associates with the F-actin-capping protein dimer (formed by CAPZA1, CAPZA2 or CAPZA3 and CAPZB) in a transient or substoichiometric manner which was initially described as WASH complex. Interacts with VPS35; mediates the association with the retromer CSC complex. Interacts with FKBP15. Interacts with CCDC93, CCDC22, VPS35L; indicative for an association of the WASH core complex with the CCC and retriever complexes. Directly interacts with TBC1D23.

The protein localises to the early endosome membrane. The protein resides in the cell membrane. Functionally, acts as a component of the WASH core complex that functions as a nucleation-promoting factor (NPF) at the surface of endosomes, where it recruits and activates the Arp2/3 complex to induce actin polymerization, playing a key role in the fission of tubules that serve as transport intermediates during endosome sorting. Mediates the recruitment of the WASH core complex to endosome membranes via binding to phospholipids and VPS35 of the retromer CSC. Mediates the recruitment of the F-actin-capping protein dimer to the WASH core complex probably promoting localized F-actin polymerization needed for vesicle scission. Via its C-terminus binds various phospholipids, most strongly phosphatidylinositol 4-phosphate (PtdIns-(4)P), phosphatidylinositol 5-phosphate (PtdIns-(5)P) and phosphatidylinositol 3,5-bisphosphate (PtdIns-(3,5)P2). Involved in the endosome-to-plasma membrane trafficking and recycling of SNX27-retromer-dependent cargo proteins, such as GLUT1. Required for the association of DNAJC13, ENTR1, ANKRD50 with retromer CSC subunit VPS35. Required for the endosomal recruitment of CCC and retriever complexes subunits COMMD1 and CCDC93 as well as the retrievere complex subunit VPS35L. The chain is WASH complex subunit 2 from Rattus norvegicus (Rat).